A 120-amino-acid polypeptide reads, in one-letter code: Ig heavy chain V region AC38 15.3 (120 aa).

The interval 1 to 98 is v segment; the sequence is QVQLLQPGTE…EDSAVYYCAR (98 aa). Cysteine 22 and cysteine 96 form a disulfide bridge. The segment at 99–105 is d segment; sequence WDYEGDR. A j segment region spans residues 106–120; that stretch reads YFDVWGTGTTVTVSS.

The chain is Ig heavy chain V region AC38 15.3 from Mus musculus (Mouse).